Consider the following 281-residue polypeptide: MLFIFPLSLPWRPSCWKESCSTGQRQAGRSREDSVTPPPSSPWPTPPAGAMSTKQEARRDEGEARTRGQEAQLRDRAHLSQQRRLKQATQFLHKDSADLLPLDSLKRLGTSKDLQPRSVIQRRLVEGNPNWLQGEPPRMQDLIHGQESRRKTSRTEIPALLVNCKCQDQLLRVAVDTGTQYNRISAGCLSRLGLEKRVLKASAGDLAPGPPTQVEQLELQLGQETVVCSAQVVDAESPEFCLGLQTLLSLKCCIDLEHGVLRLKAPFSELPFLPLYQEPGQ.

Positions 18-85 (ESCSTGQRQA…RAHLSQQRRL (68 aa)) are disordered. Pro residues predominate over residues 36–47 (TPPPSSPWPTPP). A compositionally biased stretch (basic and acidic residues) spans 55-78 (QEARRDEGEARTRGQEAQLRDRAH). The LXXLL motif motif lies at 244–248 (LQTLL).

As to quaternary structure, interacts with NR1F2, RARA and THRB in a ligand-dependent manner.

Its subcellular location is the nucleus. Functionally, down-regulates transcriptional activation by nuclear receptors such as NR1F2. The polypeptide is Nuclear receptor-interacting protein 2 (NRIP2) (Homo sapiens (Human)).